The primary structure comprises 872 residues: Probable GPI-anchored adhesin-like protein PGA25 (872 aa).

Residues 1–19 (MKVTAVSSVLLTVAALTNA) form the signal peptide. Residues 43–65 (PAAAPAAQPAAQPTTQSPADQPT) show a composition bias toward low complexity. 3 disordered regions span residues 43–383 (PAAA…TIIP), 492–517 (KPTG…DETD), and 623–809 (PDDW…ECDT). A compositionally biased stretch (polar residues) spans 66–83 (VQSPVSSDQPSTAQPVAQ). Low complexity-rich tracts occupy residues 84–110 (NNLL…TRST) and 125–171 (SSEA…SSSS). Residue N92 is glycosylated (N-linked (GlcNAc...) asparagine). Residues 196 to 207 (ETDDEDCVEETE) show a composition bias toward acidic residues. Low complexity-rich tracts occupy residues 208–225 (SPTS…VATT), 242–260 (SSAP…SSTT), and 274–293 (SSVP…NTTT). N290 carries N-linked (GlcNAc...) asparagine glycosylation. Acidic residues predominate over residues 317–328 (AEEDDEECEDPT). Positions 349–363 (TSQSKTSVSSVVSKS) are enriched in low complexity. The span at 366 to 376 (EDDDDETECET) shows a compositional bias: acidic residues. A compositionally biased stretch (polar residues) spans 495 to 506 (GSGSITVLPTKS). Composition is skewed to acidic residues over residues 624 to 635 (DDWEDDGYEGED) and 646 to 659 (DDGE…DDGE). Gly residues-rich tracts occupy residues 666-692 (SSSG…GSGS), 701-710 (SSGGTWGGSG), and 731-740 (SWWGGSGSGS). Over residues 741 to 760 (SSGSSSGVSSGDSGSSSVTG) the composition is skewed to low complexity. Over residues 761 to 771 (GSSGSWWGGSG) the composition is skewed to gly residues. Residues 780 to 808 (DGYDDEDDQTPEPECDDEDDSWDDDEECD) are compositionally biased toward acidic residues. A845 is lipidated: GPI-anchor amidated alanine. A propeptide spans 846-872 (QSVTQIENIGGKVSASGLFVVLGLLLI) (removed in mature form).

This sequence belongs to the HYR1/IFF family. The GPI-anchor is attached to the protein in the endoplasmic reticulum and serves to target the protein to the cell surface. There, the glucosamine-inositol phospholipid moiety is cleaved off and the GPI-modified mannoprotein is covalently attached via its lipidless GPI glycan remnant to the 1,6-beta-glucan of the outer cell wall layer.

It localises to the secreted. Its subcellular location is the cell wall. The protein resides in the membrane. Probable GPI-anchored cell wall protein involved in cell wall organization, hyphal growth, as well as in host-fungal interaction and virulence. In Candida albicans (strain SC5314 / ATCC MYA-2876) (Yeast), this protein is Probable GPI-anchored adhesin-like protein PGA25 (PGA25).